The following is a 39-amino-acid chain: Natriuretic peptide HsNP-a (39 aa).

A propeptide spanning residues 1–8 (SGSKTAKI) is cleaved from the precursor. A disulfide bridge connects residues cysteine 12 and cysteine 28.

It belongs to the natriuretic peptide family. As to expression, expressed by the venom gland.

It is found in the secreted. Functionally, snake venom natriuretic peptide that targets both NPR1 and NPR2. Exhibits hypotensive and vasodepressor activities. This is Natriuretic peptide HsNP-a from Hoplocephalus stephensii (Stephens's banded snake).